The following is a 258-amino-acid chain: MTLKARVIPCLDVKDGRVVKGVNFVDLIDAGDPVEAAKAYDAAGADELCFLDITASSDNRETIFDVVARTAEQCFMPLTVGGGVRQVSDIRKLLLAGADKVSINTAAVKNPEFVAEAADKFGNQCIVVAIDAKKVSAAGETDRWEIFTHGGRQPTGIDAIDFARKVVDLGAGEILLTSMDRDGTKSGYDIALTRAIADAVRAPVIASGGVGTLDHMVEGIRDGHATAVLAASIFHFGTYSIGEAKRYMAERGIAMRLD.

Residues Asp-12 and Asp-131 contribute to the active site.

Belongs to the HisA/HisF family. Heterodimer of HisH and HisF.

Its subcellular location is the cytoplasm. The catalysed reaction is 5-[(5-phospho-1-deoxy-D-ribulos-1-ylimino)methylamino]-1-(5-phospho-beta-D-ribosyl)imidazole-4-carboxamide + L-glutamine = D-erythro-1-(imidazol-4-yl)glycerol 3-phosphate + 5-amino-1-(5-phospho-beta-D-ribosyl)imidazole-4-carboxamide + L-glutamate + H(+). It participates in amino-acid biosynthesis; L-histidine biosynthesis; L-histidine from 5-phospho-alpha-D-ribose 1-diphosphate: step 5/9. In terms of biological role, IGPS catalyzes the conversion of PRFAR and glutamine to IGP, AICAR and glutamate. The HisF subunit catalyzes the cyclization activity that produces IGP and AICAR from PRFAR using the ammonia provided by the HisH subunit. This Sinorhizobium fredii (strain NBRC 101917 / NGR234) protein is Imidazole glycerol phosphate synthase subunit HisF.